Consider the following 268-residue polypeptide: Myb-related protein 315 (268 aa).

2 HTH myb-type domains span residues 9-61 (KFGL…MNYL) and 62-116 (RPDL…KKKL). 2 DNA-binding regions (H-T-H motif) span residues 37–61 (WRVI…MNYL) and 89–112 (WSKI…NTHI).

Expressed in roots, stems, leaves, seed pods and flowers. Strongest expression in the stem.

It is found in the nucleus. Its function is as follows. Transcription factor. This chain is Myb-related protein 315, found in Antirrhinum majus (Garden snapdragon).